A 267-amino-acid chain; its full sequence is Cytochrome b (267 aa).

Transmembrane regions (helical) follow at residues 4–24 (FGSL…LLAA), 48–69 (WLIR…YLHI), 84–104 (WNTG…GYVL), and 149–169 (FFTL…IHLT). Residues H54 and H68 each contribute to the heme b site. Residues H153 and H167 each contribute to the heme b site. Residue H172 participates in a ubiquinone binding. The next 2 helical transmembrane spans lie at 197-217 (LKDI…ALFA) and 259-267 (LGGVLALAA).

Belongs to the cytochrome b family. As to quaternary structure, the cytochrome bc1 complex contains 11 subunits: 3 respiratory subunits (MT-CYB, CYC1 and UQCRFS1), 2 core proteins (UQCRC1 and UQCRC2) and 6 low-molecular weight proteins (UQCRH/QCR6, UQCRB/QCR7, UQCRQ/QCR8, UQCR10/QCR9, UQCR11/QCR10 and a cleavage product of UQCRFS1). This cytochrome bc1 complex then forms a dimer. Heme b is required as a cofactor.

The protein localises to the mitochondrion inner membrane. Its function is as follows. Component of the ubiquinol-cytochrome c reductase complex (complex III or cytochrome b-c1 complex) that is part of the mitochondrial respiratory chain. The b-c1 complex mediates electron transfer from ubiquinol to cytochrome c. Contributes to the generation of a proton gradient across the mitochondrial membrane that is then used for ATP synthesis. This is Cytochrome b (MT-CYB) from Raphus cucullatus (Dodo).